The sequence spans 325 residues: uncharacterized protein (325 aa).

Residues 67–87 form a helical membrane-spanning segment; it reads WIPFFLLFSSVVVLGGLWWLG.

The protein resides in the membrane. This is an uncharacterized protein from Synechocystis sp. (strain ATCC 27184 / PCC 6803 / Kazusa).